Here is a 212-residue protein sequence, read N- to C-terminus: Adenylate kinase (212 aa).

10-15 (GSGKGT) lines the ATP pocket. The tract at residues 30–59 (STGDLMRKEINDETPLGIECARYMNEGRLV) is NMP. Residues Thr31, Arg36, 57-59 (RLV), and Gln90 contribute to the AMP site. The tract at residues 124 to 161 (GRLICPKCKVSYHIISRKPKLEGICDNDGTELVRRPDD) is LID. Residue Arg125 participates in ATP binding. Zn(2+) contacts are provided by Cys128 and Cys131. 134-135 (SY) lines the ATP pocket. Zn(2+) contacts are provided by Cys148 and Asp151. The AMP site is built by Arg158 and Arg169. Asn198 is an ATP binding site.

This sequence belongs to the adenylate kinase family. As to quaternary structure, monomer.

The protein resides in the cytoplasm. It carries out the reaction AMP + ATP = 2 ADP. It functions in the pathway purine metabolism; AMP biosynthesis via salvage pathway; AMP from ADP: step 1/1. Catalyzes the reversible transfer of the terminal phosphate group between ATP and AMP. Plays an important role in cellular energy homeostasis and in adenine nucleotide metabolism. The chain is Adenylate kinase from Mesoplasma florum (strain ATCC 33453 / NBRC 100688 / NCTC 11704 / L1) (Acholeplasma florum).